A 253-amino-acid chain; its full sequence is Phosphate import ATP-binding protein PstB (253 aa).

Residues 7–248 (MHSKGLDFFY…PGNKQTEDYI (242 aa)) enclose the ABC transporter domain. 39-46 (GPSGCGKS) contributes to the ATP binding site.

Belongs to the ABC transporter superfamily. Phosphate importer (TC 3.A.1.7) family. As to quaternary structure, the complex is composed of two ATP-binding proteins (PstB), two transmembrane proteins (PstC and PstA) and a solute-binding protein (PstS).

It localises to the cell inner membrane. The catalysed reaction is phosphate(out) + ATP + H2O = ADP + 2 phosphate(in) + H(+). Part of the ABC transporter complex PstSACB involved in phosphate import. Responsible for energy coupling to the transport system. The sequence is that of Phosphate import ATP-binding protein PstB from Oleidesulfovibrio alaskensis (strain ATCC BAA-1058 / DSM 17464 / G20) (Desulfovibrio alaskensis).